A 901-amino-acid polypeptide reads, in one-letter code: Protein translocase subunit SecA (901 aa).

ATP-binding positions include Q87, 105–109 (GEGKT), and D512. Positions 852 to 901 (AQMQQLSHQDDDSAAAAALAAQTGDRKVGRNDPCPCGSGKKYKQCHGRLS) are disordered. Residues C885, C887, C896, and H897 each coordinate Zn(2+). The span at 891–901 (KKYKQCHGRLS) shows a compositional bias: basic residues.

The protein belongs to the SecA family. As to quaternary structure, monomer and homodimer. Part of the essential Sec protein translocation apparatus which comprises SecA, SecYEG and auxiliary proteins SecDF-YajC and YidC. Zn(2+) serves as cofactor.

The protein resides in the cell inner membrane. The protein localises to the cytoplasm. It carries out the reaction ATP + H2O + cellular proteinSide 1 = ADP + phosphate + cellular proteinSide 2.. In terms of biological role, part of the Sec protein translocase complex. Interacts with the SecYEG preprotein conducting channel. Has a central role in coupling the hydrolysis of ATP to the transfer of proteins into and across the cell membrane, serving both as a receptor for the preprotein-SecB complex and as an ATP-driven molecular motor driving the stepwise translocation of polypeptide chains across the membrane. The sequence is that of Protein translocase subunit SecA from Citrobacter koseri (strain ATCC BAA-895 / CDC 4225-83 / SGSC4696).